The following is a 237-amino-acid chain: DNA repair protein RecO (237 aa).

It belongs to the RecO family.

In terms of biological role, involved in DNA repair and RecF pathway recombination. This chain is DNA repair protein RecO, found in Actinobacillus succinogenes (strain ATCC 55618 / DSM 22257 / CCUG 43843 / 130Z).